We begin with the raw amino-acid sequence, 165 residues long: Urease accessory protein UreE (165 aa).

The interval 137-156 (EAGAYQSAPHGHSHAHGHDH) is disordered.

The protein belongs to the UreE family.

It localises to the cytoplasm. Involved in urease metallocenter assembly. Binds nickel. Probably functions as a nickel donor during metallocenter assembly. This chain is Urease accessory protein UreE, found in Pseudomonas putida (strain GB-1).